The primary structure comprises 507 residues: Rhamnogalacturonase A (507 aa).

Positions 1-21 (MYVSRLLLFLAPLLVKGQLSG) are cleaved as a signal peptide. C38 and C64 are disulfide-bonded. D215 acts as the Proton donor in catalysis. A disulfide bond links C217 and C234. N235 carries an N-linked (GlcNAc...) asparagine glycan. H290 is a catalytic residue. N-linked (GlcNAc...) asparagine glycosylation is present at N317. 2 cysteine pairs are disulfide-bonded: C340/C346 and C368/C377. The segment covering 462–491 (SPATSSPTATSTAISSVDPVSAATTTATSH) has biased composition (low complexity). The tract at residues 462–507 (SPATSSPTATSTAISSVDPVSAATTTATSHGHGKSHHKHQCRAHRH) is disordered. Positions 492-507 (GHGKSHHKHQCRAHRH) are enriched in basic residues.

It belongs to the glycosyl hydrolase 28 family.

The protein localises to the secreted. The enzyme catalyses Endohydrolysis of alpha-D-GalA-(1-&gt;2)-alpha-L-Rha glycosidic bond in the rhamnogalacturonan I backbone with initial inversion of anomeric configuration releasing oligosaccharides with beta-D-GalA at the reducing end.. Functionally, pectinolytic enzymes consist of four classes of enzymes: pectine lyase, polygalacturonase, pectin methylesterase and rhamnogalacturonase. Hydrolyzes alpha-D-galacturonopyranosyl-(1,2)-alpha-L-rhamnopyranosyl linkages in the backbone of the hairy regions of pectins. Active against linseed rhamnogalacturonan. This is Rhamnogalacturonase A (rhgA) from Emericella nidulans (strain FGSC A4 / ATCC 38163 / CBS 112.46 / NRRL 194 / M139) (Aspergillus nidulans).